The primary structure comprises 238 residues: Putative type I specificity subunit S.MpnORF201P (238 aa).

The protein belongs to the type-I restriction system S methylase family. In terms of assembly, the methyltransferase is composed of M and S polypeptides.

The specificity (S) subunit of a type I methyltransferase (MTase); this subunit dictates DNA sequence specificity. The single R subunit has multiple frameshifts and is probably not expressed. In Mycoplasma pneumoniae (strain ATCC 29342 / M129 / Subtype 1) (Mycoplasmoides pneumoniae), this protein is Putative type I specificity subunit S.MpnORF201P.